The sequence spans 116 residues: Large ribosomal subunit protein uL18 (116 aa).

This sequence belongs to the universal ribosomal protein uL18 family. Part of the 50S ribosomal subunit; part of the 5S rRNA/L5/L18/L25 subcomplex. Contacts the 5S and 23S rRNAs.

Functionally, this is one of the proteins that bind and probably mediate the attachment of the 5S RNA into the large ribosomal subunit, where it forms part of the central protuberance. The protein is Large ribosomal subunit protein uL18 of Pseudomonas entomophila (strain L48).